The following is a 331-amino-acid chain: GTP 3',8-cyclase (331 aa).

The 229-residue stretch at 6 to 234 folds into the Radical SAM core domain; it reads PFNRKIDYLR…PATGKSHDGP (229 aa). Residue R15 participates in GTP binding. C22 and C26 together coordinate [4Fe-4S] cluster. Y28 is an S-adenosyl-L-methionine binding site. C29 lines the [4Fe-4S] cluster pocket. R66 is a GTP binding site. Residue G70 participates in S-adenosyl-L-methionine binding. Residue S97 participates in GTP binding. S121 is an S-adenosyl-L-methionine binding site. Position 158 (K158) interacts with GTP. M192 is an S-adenosyl-L-methionine binding site. 2 residues coordinate [4Fe-4S] cluster: C258 and C261. 263–265 contributes to the GTP binding site; the sequence is RVR. Position 275 (C275) interacts with [4Fe-4S] cluster.

Belongs to the radical SAM superfamily. MoaA family. In terms of assembly, monomer and homodimer. It depends on [4Fe-4S] cluster as a cofactor.

The catalysed reaction is GTP + AH2 + S-adenosyl-L-methionine = (8S)-3',8-cyclo-7,8-dihydroguanosine 5'-triphosphate + 5'-deoxyadenosine + L-methionine + A + H(+). It participates in cofactor biosynthesis; molybdopterin biosynthesis. Functionally, catalyzes the cyclization of GTP to (8S)-3',8-cyclo-7,8-dihydroguanosine 5'-triphosphate. The protein is GTP 3',8-cyclase of Hydrogenovibrio crunogenus (strain DSM 25203 / XCL-2) (Thiomicrospira crunogena).